We begin with the raw amino-acid sequence, 378 residues long: MDNSTTAAEVSAPTDYDYNSTSYDDDNPYAAPCSLTETWNFLGRFAPVAYILVFILALVGNILVLCVIRRYRQSRHSPCSFSLTDTFLLHLAVSDLLLAATLPFFAVEWISEWVFGKVMCKITGALFSLNVYCGVLFLACISFDRYLAIVHAINISWRRKTCHAQLACAFIWVICLGLSMVDMHFRDLVEIPGMNRMVCQIVYSEQYSKQWQIGMQLVSMVLGFILPLLVMLYCYLHIFKALCHATRRQKRRSLRLIISLVIVFVISWAPYNALRMTDSLQMLGVIVKSCALNNVLDVGILVTESLGLAHCALNPLLYGLVGVKFRRELAQMCKAALGPQGCLGLVGWANGRGSSTRRPTGSFSSVETENTSYFSVMA.

The Extracellular segment spans residues 1–47; the sequence is MDNSTTAAEVSAPTDYDYNSTSYDDDNPYAAPCSLTETWNFLGRFAP. Residues Asn3 and Asn19 are each glycosylated (N-linked (GlcNAc...) asparagine). The chain crosses the membrane as a helical span at residues 48–68; that stretch reads VAYILVFILALVGNILVLCVI. The Cytoplasmic portion of the chain corresponds to 69–86; it reads RRYRQSRHSPCSFSLTDT. A helical membrane pass occupies residues 87 to 107; sequence FLLHLAVSDLLLAATLPFFAV. Residues 108–121 lie on the Extracellular side of the membrane; the sequence is EWISEWVFGKVMCK. Cys120 and Cys199 are joined by a disulfide. The chain crosses the membrane as a helical span at residues 122-142; that stretch reads ITGALFSLNVYCGVLFLACIS. The Cytoplasmic portion of the chain corresponds to 143–164; that stretch reads FDRYLAIVHAINISWRRKTCHA. A helical transmembrane segment spans residues 165–185; sequence QLACAFIWVICLGLSMVDMHF. The Extracellular portion of the chain corresponds to 186–212; sequence RDLVEIPGMNRMVCQIVYSEQYSKQWQ. A helical membrane pass occupies residues 213-233; the sequence is IGMQLVSMVLGFILPLLVMLY. Topologically, residues 234 to 253 are cytoplasmic; that stretch reads CYLHIFKALCHATRRQKRRS. A helical transmembrane segment spans residues 254–274; the sequence is LRLIISLVIVFVISWAPYNAL. At 275 to 304 the chain is on the extracellular side; the sequence is RMTDSLQMLGVIVKSCALNNVLDVGILVTE. Residues 305 to 325 form a helical membrane-spanning segment; that stretch reads SLGLAHCALNPLLYGLVGVKF. The Cytoplasmic portion of the chain corresponds to 326–378; that stretch reads RRELAQMCKAALGPQGCLGLVGWANGRGSSTRRPTGSFSSVETENTSYFSVMA.

This sequence belongs to the G-protein coupled receptor 1 family.

Its subcellular location is the cell membrane. Functionally, receptor for the C-X-C chemokines cxcl11.1 and cxcl11.6. Promotes macrophage chemotaxis to sites of bacterial infection. This Danio rerio (Zebrafish) protein is C-X-C chemokine receptor type 3-2.